The sequence spans 161 residues: MARQKKYSGKGGARKKNKQKQNVAPRRRVEFKYKGFTLEELQEMPIKKFMEIVPSRQRRTMARGITPKQRKLVMKIKKARRLTNRGKEARVIRTHCRDFVITPEMIGLTFGIYNGKEFKEIKLVEETVGRFLGEMAPTRAVVQHGSPGMGATRGSMFVPIK.

Over residues 1-19 (MARQKKYSGKGGARKKNKQ) the composition is skewed to basic residues. Positions 1 to 26 (MARQKKYSGKGGARKKNKQKQNVAPR) are disordered.

Belongs to the universal ribosomal protein uS19 family.

Protein S19 forms a complex with S13 that binds strongly to the 16S ribosomal RNA. The chain is Small ribosomal subunit protein uS19 from Methanococcus maripaludis (strain C5 / ATCC BAA-1333).